The chain runs to 459 residues: Vasoactive intestinal polypeptide receptor 1 (459 aa).

An N-terminal signal peptide occupies residues 1–30; it reads MRPPSLPPARWLCVLAGALACALGPAGSRA. Residues 31 to 142 lie on the Extracellular side of the membrane; it reads ASPHQECEYL…EQQQTEFYDA (112 aa). Intrachain disulfides connect C37/C209, C50/C72, C63/C105, C86/C122, and C216/C286. Residues N58, N69, N100, and N104 are each glycosylated (N-linked (GlcNAc...) asparagine). Residues 143 to 167 traverse the membrane as a helical segment; sequence VKTGYTIGYSLSLASLLVAMAILSL. At 168–175 the chain is on the cytoplasmic side; it reads FRKLHCTR. The helical transmembrane segment at 176-197 threads the bilayer; it reads NYIHMHLFMSFILRATAVFIKD. The Extracellular portion of the chain corresponds to 198 to 217; the sequence is MALFNNGETDHCSEASVSCK. A helical transmembrane segment spans residues 218–242; the sequence is AAVVFFQYCVMANFFWLLVEGLYLH. Residues 243-255 lie on the Cytoplasmic side of the membrane; sequence TLLAVSFFSERKY. Residues 256–277 form a helical membrane-spanning segment; that stretch reads FWGYILIGWGVPSVFIMIWTIV. Residues 278–293 lie on the Extracellular side of the membrane; sequence RIHFEDFGCWDTIINS. N292 is a glycosylation site (N-linked (GlcNAc...) asparagine). Residues 294–318 form a helical membrane-spanning segment; it reads SLWWIIKGPILISILVNFILFICII. Over 319 to 340 the chain is Cytoplasmic; sequence RILVQKLRPPDIGKNDSSPYSR. A helical transmembrane segment spans residues 341–361; that stretch reads LAKSTLLLIPLFGVHYVMFAF. The Extracellular segment spans residues 362 to 369; that stretch reads FPDNFKAQ. A helical transmembrane segment spans residues 370–393; the sequence is VKMVFELVVGSFQGFVVAILYCFL. Residues 394–459 lie on the Cytoplasmic side of the membrane; the sequence is NGEVQAELRR…SSFQAEVSLV (66 aa).

This sequence belongs to the G-protein coupled receptor 2 family. In terms of assembly, interacts with ADCYAP1/PACAP; activated by both PACAP27 and PACAP38 neuropeptides. Interacts with VIP; the interaction results in VIPR1 activation.

Its subcellular location is the cell membrane. In terms of biological role, g protein-coupled receptor activated by the neuropeptides vasoactive intestinal peptide (VIP) and pituitary adenylate cyclase-activating polypeptide (ADCYAP1/PACAP). Binds VIP and both PACAP27 and PACAP38 bioactive peptides with the following order of ligand affinity VIP = PACAP27 &gt; PACAP38. Ligand binding causes a conformation change that triggers signaling via guanine nucleotide-binding proteins (G proteins) and modulates the activity of downstream effectors. Activates cAMP-dependent pathway. This chain is Vasoactive intestinal polypeptide receptor 1, found in Mus musculus (Mouse).